Consider the following 183-residue polypeptide: UPF0114 protein HI_0507 (183 aa).

The next 3 membrane-spanning stretches (helical) occupy residues 30-50 (LQVP…YKFI), 68-88 (IMLG…LVMV), and 150-170 (TMMW…ALAY).

Belongs to the UPF0114 family.

Its subcellular location is the cell membrane. The sequence is that of UPF0114 protein HI_0507 from Haemophilus influenzae (strain ATCC 51907 / DSM 11121 / KW20 / Rd).